The chain runs to 413 residues: Serine hydroxymethyltransferase (413 aa).

(6S)-5,6,7,8-tetrahydrofolate is bound by residues Leu-117 and 121 to 123; that span reads GHL. The residue at position 226 (Lys-226) is an N6-(pyridoxal phosphate)lysine. 349 to 351 contributes to the (6S)-5,6,7,8-tetrahydrofolate binding site; the sequence is SPF.

The protein belongs to the SHMT family. Homodimer. Pyridoxal 5'-phosphate serves as cofactor.

Its subcellular location is the cytoplasm. The enzyme catalyses (6R)-5,10-methylene-5,6,7,8-tetrahydrofolate + glycine + H2O = (6S)-5,6,7,8-tetrahydrofolate + L-serine. It participates in one-carbon metabolism; tetrahydrofolate interconversion. Its pathway is amino-acid biosynthesis; glycine biosynthesis; glycine from L-serine: step 1/1. In terms of biological role, catalyzes the reversible interconversion of serine and glycine with tetrahydrofolate (THF) serving as the one-carbon carrier. This reaction serves as the major source of one-carbon groups required for the biosynthesis of purines, thymidylate, methionine, and other important biomolecules. Also exhibits THF-independent aldolase activity toward beta-hydroxyamino acids, producing glycine and aldehydes, via a retro-aldol mechanism. In Listeria welshimeri serovar 6b (strain ATCC 35897 / DSM 20650 / CCUG 15529 / CIP 8149 / NCTC 11857 / SLCC 5334 / V8), this protein is Serine hydroxymethyltransferase.